The following is a 262-amino-acid chain: Polyamine aminopropyltransferase (262 aa).

The 249-residue stretch at Met1–Pro249 folds into the PABS domain. Asn29 is a binding site for S-methyl-5'-thioadenosine. Asp83 contributes to the spermidine binding site. Asp155 (proton acceptor) is an active-site residue.

Belongs to the spermidine/spermine synthase family. In terms of assembly, homodimer or homotetramer.

It is found in the cytoplasm. It carries out the reaction S-adenosyl 3-(methylsulfanyl)propylamine + putrescine = S-methyl-5'-thioadenosine + spermidine + H(+). The protein operates within amine and polyamine biosynthesis; spermidine biosynthesis; spermidine from putrescine: step 1/1. Functionally, catalyzes the irreversible transfer of a propylamine group from the amino donor S-adenosylmethioninamine (decarboxy-AdoMet) to putrescine (1,4-diaminobutane) to yield spermidine. The chain is Polyamine aminopropyltransferase from Helicobacter pylori (strain G27).